A 156-amino-acid chain; its full sequence is Small ribosomal subunit protein uS7c (156 aa).

This sequence belongs to the universal ribosomal protein uS7 family. Part of the 30S ribosomal subunit.

It localises to the plastid. Its subcellular location is the chloroplast. Functionally, one of the primary rRNA binding proteins, it binds directly to 16S rRNA where it nucleates assembly of the head domain of the 30S subunit. The protein is Small ribosomal subunit protein uS7c (rps7) of Guillardia theta (Cryptophyte).